The sequence spans 363 residues: MKVAISGGGTGGHVYPALALIRELKKIHPEAEFLYIGTEKGLEAGIVKREGIPFEAIEITGFKRSLSLENIKTVMRFLSGAKKSKQILRDFKPDVVIGTGGYVCGPVVYAAAKLKIPTLIHEQNSVAGLTNKFLSRYTDKVAICFEEVSDSFASEKIVFTGNPRASEVVGVDSEGALETYGLVSGKPTVLVFGGSRGARGVNEAVEAILPEWNNRDFQLLYVTGDVHYEKIKDSLAELNLGNHISVQPFIYDMPKILNAVTLVVSRAGATTLAELTALGVPSILIPSPYVTANHQENNARALEKNNAAIVITEAELKNTDLMATVDSILNDEAKLNGMKLSAKQMGRPDAAAKLVEAVLSIMK.

UDP-N-acetyl-alpha-D-glucosamine contacts are provided by residues 10–12 (TGG), Asn124, Ser195, Ile250, and Gln295.

This sequence belongs to the glycosyltransferase 28 family. MurG subfamily.

The protein resides in the cell membrane. It carries out the reaction di-trans,octa-cis-undecaprenyl diphospho-N-acetyl-alpha-D-muramoyl-L-alanyl-D-glutamyl-meso-2,6-diaminopimeloyl-D-alanyl-D-alanine + UDP-N-acetyl-alpha-D-glucosamine = di-trans,octa-cis-undecaprenyl diphospho-[N-acetyl-alpha-D-glucosaminyl-(1-&gt;4)]-N-acetyl-alpha-D-muramoyl-L-alanyl-D-glutamyl-meso-2,6-diaminopimeloyl-D-alanyl-D-alanine + UDP + H(+). It functions in the pathway cell wall biogenesis; peptidoglycan biosynthesis. Functionally, cell wall formation. Catalyzes the transfer of a GlcNAc subunit on undecaprenyl-pyrophosphoryl-MurNAc-pentapeptide (lipid intermediate I) to form undecaprenyl-pyrophosphoryl-MurNAc-(pentapeptide)GlcNAc (lipid intermediate II). In Listeria monocytogenes serotype 4b (strain CLIP80459), this protein is UDP-N-acetylglucosamine--N-acetylmuramyl-(pentapeptide) pyrophosphoryl-undecaprenol N-acetylglucosamine transferase.